Reading from the N-terminus, the 117-residue chain is Large ribosomal subunit protein bL19 (117 aa).

This sequence belongs to the bacterial ribosomal protein bL19 family.

In terms of biological role, this protein is located at the 30S-50S ribosomal subunit interface and may play a role in the structure and function of the aminoacyl-tRNA binding site. The protein is Large ribosomal subunit protein bL19 of Proteus mirabilis (strain HI4320).